Consider the following 139-residue polypeptide: Actin-depolymerizing factor 9 (139 aa).

One can recognise an ADF-H domain in the interval Gly-7–His-139.

Belongs to the actin-binding proteins ADF family.

Actin-depolymerizing protein. Severs actin filaments (F-actin) and binds to actin monomers. This chain is Actin-depolymerizing factor 9 (ADF9), found in Oryza sativa subsp. japonica (Rice).